A 123-amino-acid chain; its full sequence is Large ribosomal subunit protein bL19c (123 aa).

Belongs to the bacterial ribosomal protein bL19 family.

It localises to the plastid. The protein localises to the chloroplast. This is Large ribosomal subunit protein bL19c from Pyropia yezoensis (Susabi-nori).